The sequence spans 1144 residues: MAIRYVFGRAGRGKSYFVLEEIKKRLEGEGHHKLFLLVPEQFTLQAERDLIGKQALKGIMRAEVLSFTRLTHYVFNEVGGITKIPINEIGKNMILRKIADESSKDLSIYKSIAKQEGFITKLNDLICEMKQHDITPIELTMEFNEMEEDTLLKRKLNDIILLYQKFNNYLRDRYVDNEDNVNLLIENIEKVQFLEGAEVWIDGFQSFTPQIFRVIEKLAEKVKNLTITFTMELKSKESDQDLFHINRKTYLKIKSIAQRLGLEEEIIDLDRNERPVLPKVQEICHIEKELYAYPYQQYTGEITHLDVFSGSNLYTEMENVAAQIIHLVRDKGYRWKDIALVSAGLEEYSMILKRVFEEYSIPYFMDEKRSIMNNPIVELILSSIGILARGYQYEDVFRFLKTGFGDLNKDEVEELENYVLQYGIKGKDYAVPFTKGFTNKKHEEIEQEESDEIHEEKIKYNEFRERFIAPFLKFEKKIYRKKKVGHITKALFEFMKDLNIEAKLDQWIEELREKKYFEYVNENTQIWNKVMEILDQLTEILAEESTTLKEYGRILEAGFLACEVGVIPTTIDQVLVGSIERSKSHDIKALFVIGVNDGILPSSREDGGILLDHERESLDKKGLSIGNTLENALLEEQFTIYSALSKPTEYLWISYALADQEGKAQRQSILIDRIKKLFRNLNIQSDVVPTLNRQLHLITTPISTFKYMTESIRQNIDDKPMEDIWWDVYQWYSNESQWDERRNLMVKGLFHENQISYIGEQKARSLYEHPIKSSVSRLERFANCPFSHFVTYGLRPKERKEYQLSNPDIGRLFHDSMENFTKELVNEQIQWKDLTREQSDYFVEKVIDEMVPEFEHGIMLSTHRYQYLVTRLKRISKRAMWTLTEHIKKGQFVPMGHEIIFGLEGDIPPIVIELESGEKIYLEGRIDRVDILNDEDGNYVKIIDYKSGSKEFSLSDVYYGFQIQLLVYLDAVLSSQSQKYQAEVHPGGIFYFKIDDPMVKTTEKAVKEVEKEINKRLKMKGLVLKDVNIIKKIDEDIGRSSSILPASLTKEGEISKTSSALPEEDFKALLKHVRGLVKEIGEEMLKGNVKIEPFKKGGDTSCKYCAYISICQFDHSFHENQYKTIKELKNEEVLEKIRKENENI.

Residues 1 to 276 form the UvrD-like helicase ATP-binding domain; that stretch reads MAIRYVFGRA…IDLDRNERPV (276 aa). 8 to 15 is a binding site for ATP; sequence GRAGRGKS. In terms of domain architecture, UvrD-like helicase C-terminal spans 274–584; sequence RPVLPKVQEI…LVGSIERSKS (311 aa). [4Fe-4S] cluster-binding residues include Cys-784, Cys-1102, Cys-1105, and Cys-1111.

This sequence belongs to the helicase family. AddB/RexB type 1 subfamily. As to quaternary structure, heterodimer of AddA and AddB. The cofactor is Mg(2+). Requires [4Fe-4S] cluster as cofactor.

The heterodimer acts as both an ATP-dependent DNA helicase and an ATP-dependent, dual-direction single-stranded exonuclease. Recognizes the chi site generating a DNA molecule suitable for the initiation of homologous recombination. The AddB subunit has 5' -&gt; 3' nuclease activity but not helicase activity. This chain is ATP-dependent helicase/deoxyribonuclease subunit B, found in Alkaliphilus oremlandii (strain OhILAs) (Clostridium oremlandii (strain OhILAs)).